Here is a 678-residue protein sequence, read N- to C-terminus: DNA ligase (678 aa).

NAD(+)-binding positions include 35–39 (DSVYD), 84–85 (SL), and Glu116. Residue Lys118 is the N6-AMP-lysine intermediate of the active site. NAD(+)-binding residues include Arg139, Glu178, Lys297, and Lys321. Positions 415, 418, 433, and 438 each coordinate Zn(2+). Residues 600–678 (DGNQIFAGKT…EAQLLEMLNE (79 aa)) form the BRCT domain.

This sequence belongs to the NAD-dependent DNA ligase family. LigA subfamily. The cofactor is Mg(2+). Mn(2+) serves as cofactor.

The enzyme catalyses NAD(+) + (deoxyribonucleotide)n-3'-hydroxyl + 5'-phospho-(deoxyribonucleotide)m = (deoxyribonucleotide)n+m + AMP + beta-nicotinamide D-nucleotide.. Functionally, DNA ligase that catalyzes the formation of phosphodiester linkages between 5'-phosphoryl and 3'-hydroxyl groups in double-stranded DNA using NAD as a coenzyme and as the energy source for the reaction. It is essential for DNA replication and repair of damaged DNA. The protein is DNA ligase of Nostoc punctiforme (strain ATCC 29133 / PCC 73102).